Here is a 248-residue protein sequence, read N- to C-terminus: MSEAAKSTIDQSEVDRFSAMAAEWWSPTGKFKPLHKFNPVRLAYIRDHACENFGRDPKSARPLEGLRVLDIGCGGGLLSEPVARMGASVVGADPSEKNIGIASTHAKASGAPVDYRAVTAEQLAEAGETFDIVLNMEVVEHVADVEFFLTTCAKMVRPGGLMYVATINRTMKAAALAIFAAENVLRWLPRGTHQYEKLVRPEEIEKPLAADGLDIIARTGVFYSPLQDRWNLSKDMDVNYMLLAKRAG.

S-adenosyl-L-methionine-binding residues include Arg41, Gly72, Asp93, and Met136.

The protein belongs to the methyltransferase superfamily. UbiG/COQ3 family.

The catalysed reaction is a 3-demethylubiquinol + S-adenosyl-L-methionine = a ubiquinol + S-adenosyl-L-homocysteine + H(+). The enzyme catalyses a 3-(all-trans-polyprenyl)benzene-1,2-diol + S-adenosyl-L-methionine = a 2-methoxy-6-(all-trans-polyprenyl)phenol + S-adenosyl-L-homocysteine + H(+). It functions in the pathway cofactor biosynthesis; ubiquinone biosynthesis. Its function is as follows. O-methyltransferase that catalyzes the 2 O-methylation steps in the ubiquinone biosynthetic pathway. The chain is Ubiquinone biosynthesis O-methyltransferase from Rhizobium rhizogenes (strain K84 / ATCC BAA-868) (Agrobacterium radiobacter).